The chain runs to 349 residues: Succinylglutamate desuccinylase (349 aa).

Positions 70, 73, and 166 each coordinate Zn(2+). The active site involves glutamate 229.

Belongs to the AspA/AstE family. Succinylglutamate desuccinylase subfamily. Zn(2+) serves as cofactor.

It catalyses the reaction N-succinyl-L-glutamate + H2O = L-glutamate + succinate. The protein operates within amino-acid degradation; L-arginine degradation via AST pathway; L-glutamate and succinate from L-arginine: step 5/5. Functionally, transforms N(2)-succinylglutamate into succinate and glutamate. This is Succinylglutamate desuccinylase from Burkholderia pseudomallei (strain 1710b).